A 95-amino-acid polypeptide reads, in one-letter code: Suppressor of silencing 2b (95 aa).

Positions 8-18 are homotetramerization; the sequence is LHEIIRKLERM. The stretch at 8 to 40 forms a coiled coil; sequence LHEIIRKLERMNQKKQAQRKRHKLNRKERGHKS. The tract at residues 16 to 49 is disordered; it reads ERMNQKKQAQRKRHKLNRKERGHKSPSEQRRSEL. Residues 23–37 show a composition bias toward basic residues; the sequence is QAQRKRHKLNRKERG. The Nuclear localization signal motif lies at 26–30; sequence RKRHK. Basic and acidic residues predominate over residues 38-49; sequence HKSPSEQRRSEL.

This sequence belongs to the cucumovirus/ilarvirus protein 2b family. Homodimer. Homotetramer (dimer of dimers).

The protein localises to the host nucleus. Acts as a suppressor of RNA-mediated gene silencing, also known as post-transcriptional gene silencing (PTGS), a mechanism of plant viral defense that limits the accumulation of viral RNAs. Forms a homodimer to measure siRNA duplex in a length-preference mode. Binds to both siRNA duplexes (19bp) and long siRNA duplexes (30bp). The sequence is that of Suppressor of silencing 2b from Canna (Florist's daisy).